Consider the following 110-residue polypeptide: UPF0122 protein SP70585_1353 (110 aa).

The protein belongs to the UPF0122 family.

Its function is as follows. Might take part in the signal recognition particle (SRP) pathway. This is inferred from the conservation of its genetic proximity to ftsY/ffh. May be a regulatory protein. In Streptococcus pneumoniae (strain 70585), this protein is UPF0122 protein SP70585_1353.